Here is a 290-residue protein sequence, read N- to C-terminus: 4-hydroxybenzoate octaprenyltransferase (290 aa).

9 helical membrane-spanning segments follow: residues 20–40 (IGIL…AEGV), 43–63 (LDIL…GCVV), 92–112 (EALL…QPLN), 114–131 (LTIE…SYPF), 135–155 (FFAM…PMAF), 160–180 (GEVP…VIAY), 209–229 (VVGV…IGLL), 231–251 (NLGV…LYQY), and 266–286 (FLHN…DYLV).

This sequence belongs to the UbiA prenyltransferase family. Mg(2+) is required as a cofactor.

The protein localises to the cell inner membrane. It carries out the reaction all-trans-octaprenyl diphosphate + 4-hydroxybenzoate = 4-hydroxy-3-(all-trans-octaprenyl)benzoate + diphosphate. It participates in cofactor biosynthesis; ubiquinone biosynthesis. Catalyzes the prenylation of para-hydroxybenzoate (PHB) with an all-trans polyprenyl group. Mediates the second step in the final reaction sequence of ubiquinone-8 (UQ-8) biosynthesis, which is the condensation of the polyisoprenoid side chain with PHB, generating the first membrane-bound Q intermediate 3-octaprenyl-4-hydroxybenzoate. The protein is 4-hydroxybenzoate octaprenyltransferase of Nitrosospira multiformis (strain ATCC 25196 / NCIMB 11849 / C 71).